Reading from the N-terminus, the 308-residue chain is Zinc finger protein unc-98 (308 aa).

C2H2-type zinc fingers lie at residues 111 to 133 (YKCR…ERIH) and 139 to 161 (YVCG…AAQH). The C2H2-type 3; degenerate zinc-finger motif lies at 166-186 (GFKCDCGRTFFSYTEMLYHKH). The C2H2-type 4 zinc finger occupies 244–266 (YICEYCSKSYSDSRGLAYHMYSH).

It is found in the nucleus. The protein localises to the cytoplasm. Its function is as follows. Probable transcription factor. Required for muscle structure. Its dual subcellular localization suggests that it may function both as a muscle adhesion complex protein and as a transcription factor, or work together with transcription factors, to influence gene expression. Thought to act as a molecular bridge between unc-97 and mhc-a at the M-line of muscles, possibly in a signaling role. The sequence is that of Zinc finger protein unc-98 from Caenorhabditis briggsae.